A 97-amino-acid polypeptide reads, in one-letter code: ATP-dependent Clp protease adapter protein ClpS (97 aa).

This sequence belongs to the ClpS family. Binds to the N-terminal domain of the chaperone ClpA.

Its function is as follows. Involved in the modulation of the specificity of the ClpAP-mediated ATP-dependent protein degradation. This is ATP-dependent Clp protease adapter protein ClpS from Nautilia profundicola (strain ATCC BAA-1463 / DSM 18972 / AmH).